The chain runs to 168 residues: Pathogenesis-related protein 1B (168 aa).

Residues 1 to 30 (MGFFLFSQMPSFFLVSTLLLFLIISHSSHA) form the signal peptide. An SCP domain is found at 38–156 (LDAHNTARAD…NGGYVVSCNY (119 aa)).

It belongs to the CRISP family. Three disulfide bonds are present.

It localises to the vacuole. Its function is as follows. Probably involved in the defense reaction of plants against pathogens. The protein is Pathogenesis-related protein 1B of Nicotiana tabacum (Common tobacco).